The following is a 160-amino-acid chain: Transcription elongation factor GreA (160 aa).

The stretch at 1-72 (MAEKTYPMTQ…QIQILETKIR (72 aa)) forms a coiled coil.

The protein belongs to the GreA/GreB family.

In terms of biological role, necessary for efficient RNA polymerase transcription elongation past template-encoded arresting sites. The arresting sites in DNA have the property of trapping a certain fraction of elongating RNA polymerases that pass through, resulting in locked ternary complexes. Cleavage of the nascent transcript by cleavage factors such as GreA or GreB allows the resumption of elongation from the new 3'terminus. GreA releases sequences of 2 to 3 nucleotides. The protein is Transcription elongation factor GreA of Streptococcus agalactiae serotype Ia (strain ATCC 27591 / A909 / CDC SS700).